Here is a 733-residue protein sequence, read N- to C-terminus: Photosystem I P700 chlorophyll a apoprotein A2 (733 aa).

The next 8 helical transmembrane spans lie at 46-69 (IFAS…FHVA), 135-158 (LYNG…LHLQ), 175-199 (LNHH…HVAI), 273-291 (MAHH…GHQY), 330-353 (LHFQ…QHMY), 369-395 (AALY…IFFI), 417-439 (AIIS…LYVH), and 516-534 (FLVH…LILV). [4Fe-4S] cluster is bound by residues cysteine 558 and cysteine 567. A run of 2 helical transmembrane segments spans residues 574–595 (AFYL…YFHW) and 642–664 (LSVW…MFLI). Chlorophyll a is bound by residues histidine 653, methionine 661, and tyrosine 669. A phylloquinone-binding site is contributed by tryptophan 670. A helical transmembrane segment spans residues 706–726 (LVGLTHFAVGFVLTYAAFVIA).

This sequence belongs to the PsaA/PsaB family. In terms of assembly, the PsaA/B heterodimer binds the P700 chlorophyll special pair and subsequent electron acceptors. PSI consists of a core antenna complex that captures photons, and an electron transfer chain that converts photonic excitation into a charge separation. The eukaryotic PSI reaction center is composed of at least 11 subunits. P700 is a chlorophyll a/chlorophyll a' dimer, A0 is one or more chlorophyll a, A1 is one or both phylloquinones and FX is a shared 4Fe-4S iron-sulfur center. serves as cofactor.

Its subcellular location is the plastid. It localises to the chloroplast thylakoid membrane. It catalyses the reaction reduced [plastocyanin] + hnu + oxidized [2Fe-2S]-[ferredoxin] = oxidized [plastocyanin] + reduced [2Fe-2S]-[ferredoxin]. Its function is as follows. PsaA and PsaB bind P700, the primary electron donor of photosystem I (PSI), as well as the electron acceptors A0, A1 and FX. PSI is a plastocyanin/cytochrome c6-ferredoxin oxidoreductase, converting photonic excitation into a charge separation, which transfers an electron from the donor P700 chlorophyll pair to the spectroscopically characterized acceptors A0, A1, FX, FA and FB in turn. Oxidized P700 is reduced on the lumenal side of the thylakoid membrane by plastocyanin or cytochrome c6. This Ostreococcus tauri protein is Photosystem I P700 chlorophyll a apoprotein A2.